The chain runs to 449 residues: Heterogeneous nuclear ribonucleoprotein H (449 aa).

Met-1 is subject to N-acetylmethionine. Met-2 bears the N-acetylmethionine; in Heterogeneous nuclear ribonucleoprotein H, N-terminally processed mark. The 80-residue stretch at 11–90 (FVVKVRGLPW…RYVEVFKSNN (80 aa)) folds into the RRM 1 domain. Ser-23 carries the post-translational modification Phosphoserine. Lys-35 is covalently cross-linked (Glycyl lysine isopeptide (Lys-Gly) (interchain with G-Cter in SUMO2)). Phosphoserine occurs at positions 54 and 63. Residues Lys-87 and Lys-98 each participate in a glycyl lysine isopeptide (Lys-Gly) (interchain with G-Cter in SUMO2) cross-link. Positions 111–188 (GFVRLRGLPF…RYIEIFKSSR (78 aa)) constitute an RRM 2 domain. A Dimethylated arginine; alternate modification is found at Arg-233. Arg-233 is modified (omega-N-methylarginine; alternate). The stretch at 234–249 (GAYGGGYGGYDDYNGY) is one 1-1 repeat. Positions 234–433 (GAYGGGYGGY…YGGQSSMSGY (200 aa)) are 2 X 16 AA Gly-rich approximate repeats. The residue at position 246 (Tyr-246) is a Phosphotyrosine. The RRM 3 domain occupies 289–364 (HCVHMRGLPY…RYVELFLNST (76 aa)). A Phosphoserine modification is found at Ser-310. 3 consecutive repeat copies span residues 354-372 (HRYV…GGAY), 374-392 (HRYV…GGAY), and 418-433 (GGYG…MSGY). The segment at 354–392 (HRYVELFLNSTAGASGGAYEHRYVELFLNSTAGASGGAY) is 2 X 19 AA perfect repeats.

In terms of assembly, part of a ternary complex containing FUBP2, PTBP1, PTBP2 and HNRNPH1. Identified in the spliceosome C complex. Interacts with IGF2BP1. Interacts with CUGBP1; the interaction is RNA-dependent. Interacts with MBNL1; the interaction in RNA-independent.

It localises to the nucleus. It is found in the nucleoplasm. This protein is a component of the heterogeneous nuclear ribonucleoprotein (hnRNP) complexes which provide the substrate for the processing events that pre-mRNAs undergo before becoming functional, translatable mRNAs in the cytoplasm. Mediates pre-mRNA alternative splicing regulation. Inhibits, together with CUGBP1, insulin receptor (IR) pre-mRNA exon 11 inclusion in myoblast. Binds to the IR RNA. Binds poly(RG). This is Heterogeneous nuclear ribonucleoprotein H (Hnrnph1) from Rattus norvegicus (Rat).